Consider the following 905-residue polypeptide: Alanine--tRNA ligase (905 aa).

Positions 595, 599, 696, and 700 each coordinate Zn(2+).

It belongs to the class-II aminoacyl-tRNA synthetase family. Zn(2+) is required as a cofactor.

It localises to the cytoplasm. It carries out the reaction tRNA(Ala) + L-alanine + ATP = L-alanyl-tRNA(Ala) + AMP + diphosphate. Functionally, catalyzes the attachment of alanine to tRNA(Ala) in a two-step reaction: alanine is first activated by ATP to form Ala-AMP and then transferred to the acceptor end of tRNA(Ala). Also edits incorrectly charged Ser-tRNA(Ala) and Gly-tRNA(Ala) via its editing domain. The protein is Alanine--tRNA ligase of Anaeromyxobacter dehalogenans (strain 2CP-C).